Consider the following 236-residue polypeptide: uncharacterized protein (236 aa).

The protein belongs to the RHS family.

This is an uncharacterized protein from Escherichia coli (strain K12).